The chain runs to 392 residues: S-adenosylmethionine decarboxylase proenzyme (392 aa).

Catalysis depends on residues Glu43 and Glu46. Residue Ser100 is the Schiff-base intermediate with substrate; via pyruvic acid of the active site. At Ser100 the chain carries Pyruvic acid (Ser); by autocatalysis. The active-site Proton donor; for catalytic activity is the Cys114. Active-site proton acceptor; for processing activity residues include Ser264 and His277.

It belongs to the eukaryotic AdoMetDC family. Pyruvate is required as a cofactor. Post-translationally, is synthesized initially as an inactive proenzyme. Formation of the active enzyme involves a self-maturation process in which the active site pyruvoyl group is generated from an internal serine residue via an autocatalytic post-translational modification. Two non-identical subunits are generated from the proenzyme in this reaction, and the pyruvate is formed at the N-terminus of the alpha chain, which is derived from the carboxyl end of the proenzyme. The post-translation cleavage follows an unusual pathway, termed non-hydrolytic serinolysis, in which the side chain hydroxyl group of the serine supplies its oxygen atom to form the C-terminus of the beta chain, while the remainder of the serine residue undergoes an oxidative deamination to produce ammonia and the pyruvoyl group blocking the N-terminus of the alpha chain.

It catalyses the reaction S-adenosyl-L-methionine + H(+) = S-adenosyl 3-(methylsulfanyl)propylamine + CO2. It functions in the pathway amine and polyamine biosynthesis; S-adenosylmethioninamine biosynthesis; S-adenosylmethioninamine from S-adenosyl-L-methionine: step 1/1. The chain is S-adenosylmethionine decarboxylase proenzyme from Leishmania infantum.